The sequence spans 242 residues: GDSL esterase/lipase At5g62930 (242 aa).

Ser-11 functions as the Nucleophile in the catalytic mechanism. Positions Pro-223 to Leu-242 are disordered.

It belongs to the 'GDSL' lipolytic enzyme family.

The chain is GDSL esterase/lipase At5g62930 from Arabidopsis thaliana (Mouse-ear cress).